The sequence spans 335 residues: NAC domain-containing protein 87 (335 aa).

The NAC domain maps to 21 to 172 (LPPGFRFHPT…EWVVCRVFHK (152 aa)). Residues 119-178 (VGMKKTLVFYRGRAPKGEKTNWVMHEYRLEGKYSYYNLPKSARDEWVVCRVFHKNNPSTT) mediate DNA binding.

Its subcellular location is the nucleus. Binds to the promoter regions of genes involved in chlorophyll catabolic processes, such as NYC1, SGR1, SGR2 and PAO. This is NAC domain-containing protein 87 from Arabidopsis thaliana (Mouse-ear cress).